We begin with the raw amino-acid sequence, 179 residues long: Sperm surface protein Sp17 (179 aa).

The span at 72 to 109 shows a compositional bias: basic and acidic residues; the sequence is HAFKDEPPEKSETQKIQPEKVAIEKETMPQETVKEKET. Disordered stretches follow at residues 72–138 and 159–179; these read HAFK…EGLL and TRKE…ENNE. A compositionally biased stretch (acidic residues) spans 116–135; that stretch reads EPTEEPQKEEEEEEDEEDLE. The IQ domain occupies 143-172; it reads MQDAAVKIQAVFRGHKTRKEYLKKRDSTDE. Residues 161 to 170 show a composition bias toward basic and acidic residues; sequence KEYLKKRDST.

As to quaternary structure, homodimer. May interact with ROPN1. As to expression, testis- and sperm-specific.

It localises to the membrane. In terms of biological role, sperm surface zona pellucida binding protein. Helps to bind spermatozoa to the zona pellucida with high affinity. Might function in binding zona pellucida and carbohydrates. The polypeptide is Sperm surface protein Sp17 (SPA17) (Monodelphis domestica (Gray short-tailed opossum)).